The sequence spans 30 residues: Thaumatin-like protein (30 aa).

It belongs to the thaumatin family.

It is found in the secreted. In terms of biological role, has antifungal activity against C.comatus, F.oxysporum and P.ostreatus. This chain is Thaumatin-like protein, found in Phaseolus vulgaris (Kidney bean).